The primary structure comprises 130 residues: MTTESLETLVEQLSGLTVLELSQLKKLLEEKWDVTAAAPVVAVAGAAAAGDAPASAEPTEFAVILEDVPSDKKIGVLKVVREVTGLALKEAKEMTEGLPKTVKEKTSKSDAEDTVKKLQEAGAKAVAKGL.

This sequence belongs to the bacterial ribosomal protein bL12 family. Homodimer. Part of the ribosomal stalk of the 50S ribosomal subunit. Forms a multimeric L10(L12)X complex, where L10 forms an elongated spine to which 2 to 4 L12 dimers bind in a sequential fashion. Binds GTP-bound translation factors.

Functionally, forms part of the ribosomal stalk which helps the ribosome interact with GTP-bound translation factors. Is thus essential for accurate translation. This is Large ribosomal subunit protein bL12 from Chlamydia trachomatis serovar L2 (strain ATCC VR-902B / DSM 19102 / 434/Bu).